The sequence spans 268 residues: Phosphatidylglycerol--prolipoprotein diacylglyceryl transferase (268 aa).

The next 7 helical transmembrane spans lie at 21 to 41 (WYGIIIVSAIALSIWLGGRFA), 54 to 74 (FAIILVPAGILGARLYEVFVL), 93 to 113 (GLAIHGAVLGGAIAAAIYLPM), 122 to 142 (ADVVGLVLPLAQAIGRWGNFF), 173 to 193 (VMHPTFLYESVWNLLTFGILL), 203 to 223 (GVVFSLYLVLYNAGRFLIESI), and 236 to 256 (VAQLVAAVLAILGLVLLAWFL). Position 137 (Arg-137) interacts with a 1,2-diacyl-sn-glycero-3-phospho-(1'-sn-glycerol).

Belongs to the Lgt family.

It is found in the cell membrane. The catalysed reaction is L-cysteinyl-[prolipoprotein] + a 1,2-diacyl-sn-glycero-3-phospho-(1'-sn-glycerol) = an S-1,2-diacyl-sn-glyceryl-L-cysteinyl-[prolipoprotein] + sn-glycerol 1-phosphate + H(+). Its pathway is protein modification; lipoprotein biosynthesis (diacylglyceryl transfer). Its function is as follows. Catalyzes the transfer of the diacylglyceryl group from phosphatidylglycerol to the sulfhydryl group of the N-terminal cysteine of a prolipoprotein, the first step in the formation of mature lipoproteins. The polypeptide is Phosphatidylglycerol--prolipoprotein diacylglyceryl transferase (Symbiobacterium thermophilum (strain DSM 24528 / JCM 14929 / IAM 14863 / T)).